The following is a 117-amino-acid chain: uncharacterized protein (117 aa).

Its subcellular location is the cytoplasm. The protein localises to the nucleus. This is an uncharacterized protein from Schizosaccharomyces pombe (strain 972 / ATCC 24843) (Fission yeast).